The sequence spans 240 residues: Ribonuclease PH (240 aa).

Phosphate-binding positions include arginine 87 and 125 to 127; that span reads GTR.

It belongs to the RNase PH family. As to quaternary structure, homohexameric ring arranged as a trimer of dimers.

The catalysed reaction is tRNA(n+1) + phosphate = tRNA(n) + a ribonucleoside 5'-diphosphate. Functionally, phosphorolytic 3'-5' exoribonuclease that plays an important role in tRNA 3'-end maturation. Removes nucleotide residues following the 3'-CCA terminus of tRNAs; can also add nucleotides to the ends of RNA molecules by using nucleoside diphosphates as substrates, but this may not be physiologically important. Probably plays a role in initiation of 16S rRNA degradation (leading to ribosome degradation) during starvation. In Crocosphaera subtropica (strain ATCC 51142 / BH68) (Cyanothece sp. (strain ATCC 51142)), this protein is Ribonuclease PH.